A 223-amino-acid polypeptide reads, in one-letter code: MADSEQQEDYKIQGFDADTQSLLKTALKEPGSVDLEKAASVIVDQSLRDATFSREAGRMCYTIIQAESKQTGRTVFRSTLLNRLQVEYKNRKETRARSLQEWVCYVGFMCNVFDYLRVNNMPMLALVNPVYDCLFDLVQPDNLKREEEVDCLVLQLHRVGEQLEKMNCQRMDELFSQLRDSFLLQGGLSSLTQLLLLEMIEYRAAGWRMTDAAQKYYYSEVSE.

One can recognise an MIF4G domain in the interval Asp-9 to Gly-206.

It belongs to the MIF4GD family. Interacts with eif4g1, eif4g2 and slbp; probably tethered by SLBP to the 3'-end of mRNAs ending with the histone stem-loop, it also interacts with eif4g1 which is bound to their 5'-end.

The protein localises to the cytoplasm. It is found in the nucleus. Its function is as follows. Functions in replication-dependent translation of histone mRNAs which differ from other eukaryotic mRNAs in that they do not end with a poly-A tail but a stem-loop. May participate in circularizing those mRNAs specifically enhancing their translation. This Xenopus tropicalis (Western clawed frog) protein is MIF4G domain-containing protein (mif4gd).